Reading from the N-terminus, the 424-residue chain is STAM-binding protein (424 aa).

An interaction with CHMP3 region spans residues 1 to 127 (MSDHGDVSLP…YEQYKERKKK (127 aa)). A phosphoserine mark is found at Ser2 and Ser48. The tract at residues 227-231 (PAKPP) is interaction with STAM. Ser243 is subject to Phosphoserine. One can recognise an MPN domain in the interval 257–388 (IVVPRNLCSE…LTDYGLQEIS (132 aa)). 7 residues coordinate Zn(2+): His335, His337, Asp348, His350, Cys390, His396, and His398. Residues 335–348 (HTHPTQTAFLSSVD) carry the JAMM motif motif.

It belongs to the peptidase M67C family. In terms of assembly, interacts with STAM. Interacts with SMAD6 and SMAD7. Interacts with CHMP3; the interaction appears to relieve the autoinhibition of CHMP3. Interacts with SMURF2 and RNF11; this interaction promotes ubiquitination. It depends on Zn(2+) as a cofactor. Phosphorylated after BMP type I receptor activation. In terms of processing, ubiquitinated by SMURF2 in the presence of RNF11. Expressed in brain.

The protein localises to the nucleus. It is found in the membrane. It localises to the cytoplasm. The protein resides in the early endosome. Inhibited by N-ethylmaleimide. Zinc metalloprotease that specifically cleaves 'Lys-63'-linked polyubiquitin chains. Does not cleave 'Lys-48'-linked polyubiquitin chains. Plays a role in signal transduction for cell growth and MYC induction mediated by IL-2 and GM-CSF. Potentiates BMP (bone morphogenetic protein) signaling by antagonizing the inhibitory action of SMAD6 and SMAD7. Has a key role in regulation of cell surface receptor-mediated endocytosis and ubiquitin-dependent sorting of receptors to lysosomes. Endosomal localization of STAMBP is required for efficient EGFR degradation but not for its internalization. Involved in the negative regulation of PI3K-AKT-mTOR and RAS-MAP signaling pathways. The polypeptide is STAM-binding protein (Stambp) (Mus musculus (Mouse)).